The primary structure comprises 515 residues: ATP synthase subunit alpha (515 aa).

171–178 (GDRQTGKT) is an ATP binding site.

This sequence belongs to the ATPase alpha/beta chains family. As to quaternary structure, F-type ATPases have 2 components, CF(1) - the catalytic core - and CF(0) - the membrane proton channel. CF(1) has five subunits: alpha(3), beta(3), gamma(1), delta(1), epsilon(1). CF(0) has three main subunits: a(1), b(2) and c(9-12). The alpha and beta chains form an alternating ring which encloses part of the gamma chain. CF(1) is attached to CF(0) by a central stalk formed by the gamma and epsilon chains, while a peripheral stalk is formed by the delta and b chains.

It localises to the cell inner membrane. The catalysed reaction is ATP + H2O + 4 H(+)(in) = ADP + phosphate + 5 H(+)(out). Functionally, produces ATP from ADP in the presence of a proton gradient across the membrane. The alpha chain is a regulatory subunit. The sequence is that of ATP synthase subunit alpha from Xylella fastidiosa (strain M12).